Reading from the N-terminus, the 216-residue chain is Octanoyltransferase (216 aa).

A BPL/LPL catalytic domain is found at 24 to 212 (KFRKECILFL…NLCSFLEPIN (189 aa)). Residues 69 to 76 (RGGDFTAH), 140 to 142 (SIG), and 153 to 155 (GIA) each bind substrate. The Acyl-thioester intermediate role is filled by Cys171.

The protein belongs to the LipB family.

The protein localises to the cytoplasm. It catalyses the reaction octanoyl-[ACP] + L-lysyl-[protein] = N(6)-octanoyl-L-lysyl-[protein] + holo-[ACP] + H(+). Its pathway is protein modification; protein lipoylation via endogenous pathway; protein N(6)-(lipoyl)lysine from octanoyl-[acyl-carrier-protein]: step 1/2. In terms of biological role, catalyzes the transfer of endogenously produced octanoic acid from octanoyl-acyl-carrier-protein onto the lipoyl domains of lipoate-dependent enzymes. Lipoyl-ACP can also act as a substrate although octanoyl-ACP is likely to be the physiological substrate. This Leptospira interrogans serogroup Icterohaemorrhagiae serovar copenhageni (strain Fiocruz L1-130) protein is Octanoyltransferase.